The sequence spans 274 residues: ATP synthase subunit b 2 (274 aa).

A helical transmembrane segment spans residues 2-22 (HIDWFVLLAQLVNFLILIYLL).

This sequence belongs to the ATPase B chain family. As to quaternary structure, F-type ATPases have 2 components, F(1) - the catalytic core - and F(0) - the membrane proton channel. F(1) has five subunits: alpha(3), beta(3), gamma(1), delta(1), epsilon(1). F(0) has three main subunits: a(1), b(2) and c(10-14). The alpha and beta chains form an alternating ring which encloses part of the gamma chain. F(1) is attached to F(0) by a central stalk formed by the gamma and epsilon chains, while a peripheral stalk is formed by the delta and b chains.

It localises to the cell inner membrane. In terms of biological role, f(1)F(0) ATP synthase produces ATP from ADP in the presence of a proton or sodium gradient. F-type ATPases consist of two structural domains, F(1) containing the extramembraneous catalytic core and F(0) containing the membrane proton channel, linked together by a central stalk and a peripheral stalk. During catalysis, ATP synthesis in the catalytic domain of F(1) is coupled via a rotary mechanism of the central stalk subunits to proton translocation. Its function is as follows. Component of the F(0) channel, it forms part of the peripheral stalk, linking F(1) to F(0). This is ATP synthase subunit b 2 from Syntrophus aciditrophicus (strain SB).